The chain runs to 82 residues: Large ribosomal subunit protein uL23 (82 aa).

The protein belongs to the universal ribosomal protein uL23 family. Part of the 50S ribosomal subunit. Contacts protein L29.

In terms of biological role, binds to 23S rRNA. One of the proteins that surrounds the polypeptide exit tunnel on the outside of the ribosome. The sequence is that of Large ribosomal subunit protein uL23 from Natronomonas pharaonis (strain ATCC 35678 / DSM 2160 / CIP 103997 / JCM 8858 / NBRC 14720 / NCIMB 2260 / Gabara) (Halobacterium pharaonis).